Consider the following 721-residue polypeptide: Polyribonucleotide nucleotidyltransferase (721 aa).

Residues aspartate 485 and aspartate 491 each coordinate Mg(2+). The 60-residue stretch at 552–611 folds into the KH domain; it reads PKIYIVKIHPDKIREIIGPGGKVIRELQAMSNTRIEVDDSGTVKIAASTEEEARIAIKAV. The S1 motif domain maps to 621 to 689; sequence GEIYEGEVVR…PEGKIRLSRK (69 aa). The segment at 687–721 is disordered; that stretch reads SRKALLPAPEKGEEDEKSAPRSRRPGGNSDRRNNR.

This sequence belongs to the polyribonucleotide nucleotidyltransferase family. Requires Mg(2+) as cofactor.

It localises to the cytoplasm. It carries out the reaction RNA(n+1) + phosphate = RNA(n) + a ribonucleoside 5'-diphosphate. Its function is as follows. Involved in mRNA degradation. Catalyzes the phosphorolysis of single-stranded polyribonucleotides processively in the 3'- to 5'-direction. This is Polyribonucleotide nucleotidyltransferase from Desulfosudis oleivorans (strain DSM 6200 / JCM 39069 / Hxd3) (Desulfococcus oleovorans).